We begin with the raw amino-acid sequence, 437 residues long: Purple acid phosphatase 21 (437 aa).

The N-terminal stretch at 1-25 is a signal peptide; sequence MKKMKIFGFLISFSLFFLSPFVCQA. Residue asparagine 30 is glycosylated (N-linked (GlcNAc...) asparagine). Fe cation is bound by residues aspartate 152, aspartate 179, and tyrosine 182. Aspartate 179 is a Zn(2+) binding site. Positions 212 and 296 each coordinate Zn(2+). Asparagine 212 serves as a coordination point for substrate. The Proton donor role is filled by histidine 306. Histidine 333 serves as a coordination point for Zn(2+). 333–335 contributes to the substrate binding site; sequence HVH. Residue histidine 335 coordinates Fe cation.

Belongs to the metallophosphoesterase superfamily. Purple acid phosphatase family. Homodimer. Requires Fe cation as cofactor. Zn(2+) serves as cofactor. Expressed flowers and siliques.

It is found in the secreted. It catalyses the reaction a phosphate monoester + H2O = an alcohol + phosphate. The sequence is that of Purple acid phosphatase 21 (PAP21) from Arabidopsis thaliana (Mouse-ear cress).